The primary structure comprises 294 residues: tRNA pseudouridine synthase B (294 aa).

D39 functions as the Nucleophile in the catalytic mechanism.

This sequence belongs to the pseudouridine synthase TruB family. Type 1 subfamily.

It carries out the reaction uridine(55) in tRNA = pseudouridine(55) in tRNA. Responsible for synthesis of pseudouridine from uracil-55 in the psi GC loop of transfer RNAs. This Streptococcus pyogenes serotype M2 (strain MGAS10270) protein is tRNA pseudouridine synthase B.